The following is a 294-amino-acid chain: MFLMEKLLERVNYILEALPYITQYSGKTVVIKYGGAAMAKADLKESFAKDIVLLKYVGIHPVIVHGGGPEINRLLDNLKIPTEFVHGHRVTDNQTMEIVEMVLTGKVNKQIVSLINSQGGKAVGISGKDGNLAKATKAPIEIELEGKEKQLFDVGLVGKIESVNPEILHNLQKAGFIPVISPVAENSEGESLNINADTFAGEIAGALKAEKLILLTDTQGILIDNQLVTGLNRNKVKDYIRKGEISGGMIPKVECCLTAIDQGVRRTHIIDGRVSHSILIEIFTDQGIGSLIES.

Substrate is bound by residues 67–68, Arg-89, and Asn-193; that span reads GG.

Belongs to the acetylglutamate kinase family. ArgB subfamily.

The protein resides in the cytoplasm. The catalysed reaction is N-acetyl-L-glutamate + ATP = N-acetyl-L-glutamyl 5-phosphate + ADP. The protein operates within amino-acid biosynthesis; L-arginine biosynthesis; N(2)-acetyl-L-ornithine from L-glutamate: step 2/4. Its function is as follows. Catalyzes the ATP-dependent phosphorylation of N-acetyl-L-glutamate. The sequence is that of Acetylglutamate kinase from Leptospira interrogans serogroup Icterohaemorrhagiae serovar copenhageni (strain Fiocruz L1-130).